A 102-amino-acid chain; its full sequence is FMRFamide-like neuropeptides 9 (102 aa).

An N-terminal signal peptide occupies residues 1–19; the sequence is MNQFYALFLVACIAAMANA. The propeptide occupies 20–63; the sequence is YEEPDLDALAEFCGKESNRKYCDQIAQLATQHAIGINQEQVRME. Residue F72 is modified to Phenylalanine amide. Residues 75-90 constitute a propeptide that is removed on maturation; that stretch reads RSGYPLVIDDEEMRMD. At F99 the chain carries Phenylalanine amide.

Belongs to the FARP (FMRFamide related peptide) family. As to expression, each flp gene is expressed in a distinct set of neurons.

The protein localises to the secreted. Its function is as follows. FMRFamides and FMRFamide-like peptides are neuropeptides. KPSFVRF-amide: Has no effect on somatic body wall muscle, inhibits contraction of vaginal vera muscle, and inhibits the activity of the dissected pharyngeal myogenic muscle system. Acts as a ligand for the npr-22 receptor in vitro. In Caenorhabditis elegans, this protein is FMRFamide-like neuropeptides 9.